The primary structure comprises 470 residues: MAKKKTSSSMARSQLAALLISLCFLSLASNAVGWSRRGEREEEDERRRHGGEGGRPYHLGEESFRHWTRTRHGRFSVLERFPDEQVVGAAVGGYRVAVLEAAPRAFLQPSHYDADEVFYVKEGEGVIVLLREGRRESFCVREGDAMVIPAGAIVYSANTHSSKWFRVVMLLNPVSTPGHFEEYFPVGGDRPESFFSAFSDDVLQAAFNTRREELEKVFERQREGGEITTAPEEQIRELSKSCSRGGGGGSGSEWEIKPSSLTGKSPYFSNNHGKLFELTGDECRHLKKLDLQIGLANITRGSMIAPNYNTRATKLAVVLQGSGYFEMACPHVSGGGSSERREREREHGRRREEEQGEEEHGERGEKARRYHKVRAQVREESVIVIPASHPATIVASEGESLAVVCFFVGANHDEKVFLAGRNSPLRQLDDPAKKLVFGGSAAREADRVLAAQPEQILLRGPHGRGSVSDM.

Positions 1–34 (MAKKKTSSSMARSQLAALLISLCFLSLASNAVGW) are cleaved as a signal peptide. The segment covering 36–52 (RRGEREEEDERRRHGGE) has biased composition (basic and acidic residues). Disordered regions lie at residues 36 to 59 (RRGE…PYHL) and 240 to 261 (KSCS…PSSL). Cupin type-1 domains follow at residues 57–215 (YHLG…EELE) and 259–445 (SSLT…AREA). Residue Asn-297 is glycosylated (N-linked (GlcNAc...) asparagine). Residues 330–368 (PHVSGGGSSERREREREHGRRREEEQGEEEHGERGEKAR) are disordered. The span at 338 to 367 (SERREREREHGRRREEEQGEEEHGERGEKA) shows a compositional bias: basic and acidic residues. The Zn(2+) site is built by His-347, Glu-352, and His-360.

This sequence belongs to the 7S seed storage protein family. As to quaternary structure, homotrimer. It depends on Zn(2+) as a cofactor.

The protein resides in the secreted. In terms of biological role, seed storage protein. Globulin-like protein that acts as a zinc metalloprotease. Cleaves specifically between Leu-15 and Tyr-16 of insulin B chain, and Gln-1 and Leu-2 of neurotensin (NT) peptide in vitro. May play a role as an initiating endopeptidase in germinating seeds. The sequence is that of Cupincin from Oryza sativa subsp. japonica (Rice).